Here is a 212-residue protein sequence, read N- to C-terminus: Large ribosomal subunit protein uL3 (212 aa).

The interval 127–153 (FRGGPATHGQSDRHRAPGSIGSGTTPG) is disordered.

The protein belongs to the universal ribosomal protein uL3 family. Part of the 50S ribosomal subunit. Forms a cluster with proteins L14 and L19.

Functionally, one of the primary rRNA binding proteins, it binds directly near the 3'-end of the 23S rRNA, where it nucleates assembly of the 50S subunit. The chain is Large ribosomal subunit protein uL3 from Herpetosiphon aurantiacus (strain ATCC 23779 / DSM 785 / 114-95).